The following is a 347-amino-acid chain: Large ribosomal subunit protein uL3 (347 aa).

This sequence belongs to the universal ribosomal protein uL3 family. As to quaternary structure, part of the 50S ribosomal subunit. Forms a cluster with proteins L14 and L24e.

Its function is as follows. One of the primary rRNA binding proteins, it binds directly near the 3'-end of the 23S rRNA, where it nucleates assembly of the 50S subunit. The polypeptide is Large ribosomal subunit protein uL3 (Caldivirga maquilingensis (strain ATCC 700844 / DSM 13496 / JCM 10307 / IC-167)).